The chain runs to 249 residues: Glutathione S-transferase S1 (249 aa).

Residues 1-38 (MADEAQAPPAEGAPPAEGEAPPPAEGAEGAVEGGEAAP) show a composition bias toward low complexity. The segment at 1-42 (MADEAQAPPAEGAPPAEGEAPPPAEGAEGAVEGGEAAPPAEP) is disordered. A GST N-terminal domain is found at 48 to 125 (HSYTLFYFNV…FLAKTVGLCG (78 aa)). Glutathione is bound by residues Tyr-54, Trp-85, Lys-89, 96–97 (QM), and 109–110 (QS). The GST C-terminal domain occupies 127 to 249 (TPWEDLQIDI…WIEKRPVTEV (123 aa)).

Belongs to the GST superfamily. Sigma family. Homodimer.

It carries out the reaction RX + glutathione = an S-substituted glutathione + a halide anion + H(+). Its function is as follows. Conjugation of reduced glutathione to a wide number of exogenous and endogenous hydrophobic electrophiles. May be involved in the detoxification of metabolites produced during cellular division and morphogenesis. In Drosophila melanogaster (Fruit fly), this protein is Glutathione S-transferase S1.